A 424-amino-acid chain; its full sequence is Histidine--tRNA ligase (424 aa).

The protein belongs to the class-II aminoacyl-tRNA synthetase family. As to quaternary structure, homodimer.

Its subcellular location is the cytoplasm. It catalyses the reaction tRNA(His) + L-histidine + ATP = L-histidyl-tRNA(His) + AMP + diphosphate + H(+). This chain is Histidine--tRNA ligase, found in Salmonella typhi.